A 110-amino-acid chain; its full sequence is UPF0122 protein SPG_1182 (110 aa).

The protein belongs to the UPF0122 family.

Its function is as follows. Might take part in the signal recognition particle (SRP) pathway. This is inferred from the conservation of its genetic proximity to ftsY/ffh. May be a regulatory protein. This is UPF0122 protein SPG_1182 from Streptococcus pneumoniae serotype 19F (strain G54).